Reading from the N-terminus, the 610-residue chain is Phosphoprotein 85 (610 aa).

2 disordered regions span residues 462–530 (NEGR…NISD) and 543–610 (EEPM…DARL). Residues 467–478 (SSRASPSHSTST) are compositionally biased toward low complexity. Residues 484-495 (PQSDRSTPTSIL) show a composition bias toward polar residues. Low complexity-rich tracts occupy residues 503-515 (SNSR…FSQE) and 552-567 (SPQS…RQSR). A compositionally biased stretch (polar residues) spans 581–592 (VPSSQTRRQNNA). The segment covering 600 to 610 (RLTEMMNDARL) has biased composition (basic and acidic residues).

Belongs to the herpesviridae pp85 family. Phosphorylated.

The protein localises to the virion tegument. It is found in the host cytoplasm. This is Phosphoprotein 85 (U14) from Homo sapiens (Human).